The sequence spans 177 residues: Probable chemoreceptor glutamine deamidase CheD (177 aa).

The protein belongs to the CheD family.

It carries out the reaction L-glutaminyl-[protein] + H2O = L-glutamyl-[protein] + NH4(+). Probably deamidates glutamine residues to glutamate on methyl-accepting chemotaxis receptors (MCPs), playing an important role in chemotaxis. This chain is Probable chemoreceptor glutamine deamidase CheD, found in Pseudomonas fluorescens (strain SBW25).